A 534-amino-acid polypeptide reads, in one-letter code: MYRRDFLKSVTAAWVAFGLPNPLGGAFATNRVIPLRRLGQSQRFDYEWLKERARALAATPYHSRKRVLPTPLERLSWDQYQSIRYRQDHALWADSDAHFQVKFFHLGLYFHSPVRMYEVVDGMAQELAYDPAAFDYGSSGLNGKGLPKDLGFAGFRLNTRKDIDRDFAAFLGASYFRAVGQEGQYGQSARGLAVNTGSSGPEEFPDFIAYYLEQPTADADTVVMYGLLDSPSIAGAYRFSITHADVLRMDIDSALYPRETIERLGIAPCTSMYQVGENDRRMGWDWRPEIHDTDGLFLWTGNGEWIWRPLCNPLHLRFNMFLDNNPRGFGLLQRDRDFDHYQDDGVFYEKRPCLWVEPKHGWGEGSVQLVEIPTFDETFDNIVAFWNPRNKPHPGQELLFGYRLYWGAFPPVSSSLAYCVATRTGLGGVVGQKRKYFSWRFAVDFVGGKLAALARVHDVSVEPVLHMTRGRPEIVSARPLHEIRGYRVMFDVVPLEDSAQQIDIRLYLRDTNGEPLTETWLYQWVPPILEERKY.

Positions 1–28 (MYRRDFLKSVTAAWVAFGLPNPLGGAFA) form a signal peptide, tat-type signal.

Belongs to the OpgD/OpgG family. Post-translationally, predicted to be exported by the Tat system. The position of the signal peptide cleavage has not been experimentally proven.

It is found in the periplasm. It functions in the pathway glycan metabolism; osmoregulated periplasmic glucan (OPG) biosynthesis. In terms of biological role, probably involved in the control of the structural glucose backbone of osmoregulated periplasmic glucans (OPGs). This Xylella fastidiosa (strain M23) protein is Glucans biosynthesis protein D.